A 250-amino-acid polypeptide reads, in one-letter code: Sulfate transporter CysZ (250 aa).

A run of 4 helical transmembrane segments spans residues 26 to 46, 71 to 91, 150 to 170, and 211 to 231; these read LFVL…IYLA, ILWP…FTML, LFIL…WLLF, and IVYL…AAVA.

This sequence belongs to the CysZ family.

Its subcellular location is the cell inner membrane. Functionally, high affinity, high specificity proton-dependent sulfate transporter, which mediates sulfate uptake. Provides the sulfur source for the cysteine synthesis pathway. This Pseudomonas fluorescens (strain Pf0-1) protein is Sulfate transporter CysZ.